The chain runs to 122 residues: Phosphoribosyl-ATP pyrophosphatase (122 aa).

This sequence belongs to the PRA-PH family.

It localises to the cytoplasm. It catalyses the reaction 1-(5-phospho-beta-D-ribosyl)-ATP + H2O = 1-(5-phospho-beta-D-ribosyl)-5'-AMP + diphosphate + H(+). The protein operates within amino-acid biosynthesis; L-histidine biosynthesis; L-histidine from 5-phospho-alpha-D-ribose 1-diphosphate: step 2/9. The sequence is that of Phosphoribosyl-ATP pyrophosphatase from Burkholderia thailandensis (strain ATCC 700388 / DSM 13276 / CCUG 48851 / CIP 106301 / E264).